We begin with the raw amino-acid sequence, 360 residues long: UPF0283 membrane protein Oant_2119 (360 aa).

The disordered stretch occupies residues 1-30; it reads MTEKTPRKPASFTVSQASNRPEAADEAPRR. 2 helical membrane passes run 77-97 and 108-128; these read ILFG…TEDL and LGWT…AIVV.

The protein belongs to the UPF0283 family.

The protein localises to the cell inner membrane. This chain is UPF0283 membrane protein Oant_2119, found in Brucella anthropi (strain ATCC 49188 / DSM 6882 / CCUG 24695 / JCM 21032 / LMG 3331 / NBRC 15819 / NCTC 12168 / Alc 37) (Ochrobactrum anthropi).